Here is a 153-residue protein sequence, read N- to C-terminus: Iron-sulfur cluster assembly scaffold protein IscU 1 (153 aa).

4 residues coordinate [2Fe-2S] cluster: cysteine 33, cysteine 58, histidine 101, and cysteine 102.

Belongs to the NifU family. Forms a heterotetramer with IscS2.

In terms of biological role, a scaffold on which IscS assembles Fe-S clusters. Subsequently gives the nascent cluster to other proteins. It is likely that Fe-S cluster coordination is flexible as the role of this complex is to build and then hand off Fe-S clusters. The protein is Iron-sulfur cluster assembly scaffold protein IscU 1 (iscU1) of Archaeoglobus fulgidus (strain ATCC 49558 / DSM 4304 / JCM 9628 / NBRC 100126 / VC-16).